The primary structure comprises 565 residues: uncharacterized protein (565 aa).

Transmembrane regions (helical) follow at residues 4–26 (FVQFLGSNPYILLFLTIGLAVWV), 33–55 (GYGLGAVAAAIVVGCLVATVGAA), 68–90 (SLLYYLFMYGVGLRVGPSFVNAL), 97–119 (YAILAIIAPILGLAIVVLGTQFF), and 162–184 (ISAMIALSYGITYIWGTVGIILL). 2 RCK C-terminal domains span residues 210–295 (PNVD…LGPE) and 296–379 (VPDA…IFGV). 5 helical membrane-spanning segments follow: residues 389–411 (LLTLSFGMILGFLIGLIEVPAFG), 415–432 (GLGNAGGLLLSGIIVSSI), 453–472 (LGLIGFVAIVGINAGADLLT), 482–504 (IFIVGFLASTIPPIIVWAIGFHI), and 539–561 (WLGFPVGYAVSGVLLTVFGYFAM).

This sequence belongs to the AAE transporter (TC 2.A.81) family.

The protein localises to the cell membrane. This is an uncharacterized protein from Bordetella bronchiseptica (strain ATCC BAA-588 / NCTC 13252 / RB50) (Alcaligenes bronchisepticus).